Consider the following 225-residue polypeptide: Ribose-5-phosphate isomerase A (225 aa).

Residues 26–29 (TGST), 82–85 (DGAD), and 95–98 (KGGG) contribute to the substrate site. Catalysis depends on glutamate 104, which acts as the Proton acceptor. Position 122 (lysine 122) interacts with substrate.

The protein belongs to the ribose 5-phosphate isomerase family. Homodimer.

The enzyme catalyses aldehydo-D-ribose 5-phosphate = D-ribulose 5-phosphate. It functions in the pathway carbohydrate degradation; pentose phosphate pathway; D-ribose 5-phosphate from D-ribulose 5-phosphate (non-oxidative stage): step 1/1. Its function is as follows. Catalyzes the reversible conversion of ribose-5-phosphate to ribulose 5-phosphate. This chain is Ribose-5-phosphate isomerase A, found in Streptococcus mutans serotype c (strain ATCC 700610 / UA159).